The sequence spans 125 residues: UPF0734 protein DDB_G0273871/DDB_G0273177 (125 aa).

The protein belongs to the UPF0734 family.

The sequence is that of UPF0734 protein DDB_G0273871/DDB_G0273177 from Dictyostelium discoideum (Social amoeba).